A 239-amino-acid polypeptide reads, in one-letter code: Sugar fermentation stimulation protein homolog (239 aa).

Belongs to the SfsA family.

The polypeptide is Sugar fermentation stimulation protein homolog (Maridesulfovibrio salexigens (strain ATCC 14822 / DSM 2638 / NCIMB 8403 / VKM B-1763) (Desulfovibrio salexigens)).